We begin with the raw amino-acid sequence, 464 residues long: Siroheme synthase (464 aa).

The interval 1–203 (MKYLPLFHNL…GQGAEAERLL (203 aa)) is precorrin-2 dehydrogenase /sirohydrochlorin ferrochelatase. Residues 22-23 (EI) and 43-44 (PE) each bind NAD(+). Ser128 is subject to Phosphoserine. The segment at 216-464 (GEVYLVGAGP…AWFEGAQGQI (249 aa)) is uroporphyrinogen-III C-methyltransferase. Residue Pro225 participates in S-adenosyl-L-methionine binding. Asp248 serves as the catalytic Proton acceptor. The Proton donor role is filled by Lys270. S-adenosyl-L-methionine is bound by residues 301-303 (GGD), Ile306, 331-332 (TA), Met383, and Gly412.

It in the N-terminal section; belongs to the precorrin-2 dehydrogenase / sirohydrochlorin ferrochelatase family. This sequence in the C-terminal section; belongs to the precorrin methyltransferase family.

It carries out the reaction uroporphyrinogen III + 2 S-adenosyl-L-methionine = precorrin-2 + 2 S-adenosyl-L-homocysteine + H(+). The catalysed reaction is precorrin-2 + NAD(+) = sirohydrochlorin + NADH + 2 H(+). It catalyses the reaction siroheme + 2 H(+) = sirohydrochlorin + Fe(2+). The protein operates within cofactor biosynthesis; adenosylcobalamin biosynthesis; precorrin-2 from uroporphyrinogen III: step 1/1. Its pathway is cofactor biosynthesis; adenosylcobalamin biosynthesis; sirohydrochlorin from precorrin-2: step 1/1. It functions in the pathway porphyrin-containing compound metabolism; siroheme biosynthesis; precorrin-2 from uroporphyrinogen III: step 1/1. It participates in porphyrin-containing compound metabolism; siroheme biosynthesis; siroheme from sirohydrochlorin: step 1/1. The protein operates within porphyrin-containing compound metabolism; siroheme biosynthesis; sirohydrochlorin from precorrin-2: step 1/1. Multifunctional enzyme that catalyzes the SAM-dependent methylations of uroporphyrinogen III at position C-2 and C-7 to form precorrin-2 via precorrin-1. Then it catalyzes the NAD-dependent ring dehydrogenation of precorrin-2 to yield sirohydrochlorin. Finally, it catalyzes the ferrochelation of sirohydrochlorin to yield siroheme. This Pseudomonas fluorescens (strain Pf0-1) protein is Siroheme synthase.